A 23-amino-acid polypeptide reads, in one-letter code: Elongation factor Tu (23 aa).

This sequence belongs to the GTP-binding elongation factor family. EF-Tu/EF-1A subfamily. In terms of assembly, monomer. In terms of processing, the N-terminus is blocked. Post-translationally, the C-terminus may be subjected to proteolysis.

It is found in the cytoplasm. Functionally, this protein promotes the GTP-dependent binding of aminoacyl-tRNA to the A-site of ribosomes during protein biosynthesis. The sequence is that of Elongation factor Tu (tuf) from Delftia acidovorans (Pseudomonas acidovorans).